The following is a 555-amino-acid chain: Protein PLASTID TRANSCRIPTIONALLY ACTIVE 12, chloroplastic (555 aa).

The N-terminal 58 residues, 1 to 58, are a transit peptide targeting the chloroplast; sequence MASCYNPWRLFPGMSTAVPAGPVTAPAHSRTCKSSKVFSALPHRRGLLFLGTRRARIK. 3 disordered regions span residues 80–100, 115–167, and 468–541; these read YFDSTSGQLEPASGARASIPG, ARAP…EPDV, and SYNE…IDDS. The segment covering 144–154 has biased composition (polar residues); sequence QVTSASGTEGA. Composition is skewed to acidic residues over residues 471-480 and 490-502; these read EDSDDEDEDV and LEDEEDDRDDVAE. The segment covering 508–519 has biased composition (polar residues); sequence NQNWSALKSTGQ. A compositionally biased stretch (basic and acidic residues) spans 521–538; that stretch reads EKPKEKSKKDEMTLKEAI.

As to quaternary structure, component of the plastid-encoded plastid RNA polymerase (PEP) complex.

It is found in the plastid. It localises to the chloroplast stroma. Its subcellular location is the nucleus. Required for the activity of the plastid-encoded RNA polymerase (PEP) and full expression of genes transcribed by PEP. Required for the proper build-up and formation of the PEP-complex. Binds single-stranded (ss) DNA and RNA, but not double-stranded (ds) DNA. This Zea mays (Maize) protein is Protein PLASTID TRANSCRIPTIONALLY ACTIVE 12, chloroplastic.